Reading from the N-terminus, the 205-residue chain is Methylthioribulose-1-phosphate dehydratase (205 aa).

2 residues coordinate Zn(2+): H98 and H100.

This sequence belongs to the aldolase class II family. MtnB subfamily. The cofactor is Zn(2+).

It carries out the reaction 5-(methylsulfanyl)-D-ribulose 1-phosphate = 5-methylsulfanyl-2,3-dioxopentyl phosphate + H2O. It functions in the pathway amino-acid biosynthesis; L-methionine biosynthesis via salvage pathway; L-methionine from S-methyl-5-thio-alpha-D-ribose 1-phosphate: step 2/6. Functionally, catalyzes the dehydration of methylthioribulose-1-phosphate (MTRu-1-P) into 2,3-diketo-5-methylthiopentyl-1-phosphate (DK-MTP-1-P). This Gluconacetobacter diazotrophicus (strain ATCC 49037 / DSM 5601 / CCUG 37298 / CIP 103539 / LMG 7603 / PAl5) protein is Methylthioribulose-1-phosphate dehydratase.